Reading from the N-terminus, the 195-residue chain is Large ribosomal subunit protein bL17 (195 aa).

Residues 125 to 195 form a disordered region; the sequence is ANRARRVGAS…PTQDSDADKS (71 aa). A compositionally biased stretch (low complexity) spans 136 to 152; the sequence is QTAPVAAAAAPQAAVEP. Composition is skewed to acidic residues over residues 153–173 and 183–195; these read EATEGPDADDSSALPEAEDTT and TDDPTQDSDADKS.

Belongs to the bacterial ribosomal protein bL17 family. Part of the 50S ribosomal subunit. Contacts protein L32.

In Mycobacterium sp. (strain JLS), this protein is Large ribosomal subunit protein bL17.